The chain runs to 160 residues: Cyclic pyranopterin monophosphate synthase (160 aa).

Substrate contacts are provided by residues 74–76 and 112–113; these read LSH and ME. Residue D127 is part of the active site.

Belongs to the MoaC family. Homohexamer; trimer of dimers.

It carries out the reaction (8S)-3',8-cyclo-7,8-dihydroguanosine 5'-triphosphate = cyclic pyranopterin phosphate + diphosphate. It functions in the pathway cofactor biosynthesis; molybdopterin biosynthesis. In terms of biological role, catalyzes the conversion of (8S)-3',8-cyclo-7,8-dihydroguanosine 5'-triphosphate to cyclic pyranopterin monophosphate (cPMP). This is Cyclic pyranopterin monophosphate synthase from Trichlorobacter lovleyi (strain ATCC BAA-1151 / DSM 17278 / SZ) (Geobacter lovleyi).